We begin with the raw amino-acid sequence, 229 residues long: 2-phytyl-1,4-naphtoquinone methyltransferase (229 aa).

It belongs to the class I-like SAM-binding methyltransferase superfamily. MenG/UbiE family.

The enzyme catalyses demethylphylloquinol + S-adenosyl-L-methionine = phylloquinol + S-adenosyl-L-homocysteine + H(+). It participates in cofactor biosynthesis; phylloquinone biosynthesis. Functionally, methyltransferase required for the conversion of 2-phytyl-1,4-beta-naphthoquinol to phylloquinol. The protein is 2-phytyl-1,4-naphtoquinone methyltransferase of Trichormus variabilis (strain ATCC 29413 / PCC 7937) (Anabaena variabilis).